A 360-amino-acid chain; its full sequence is Photosystem II protein D1 1 (360 aa).

Helical transmembrane passes span 29 to 46 (YIGW…TATT), 118 to 133 (HFLI…QWEL), and 142 to 156 (WICV…AATA). H118 lines the chlorophyll a pocket. Position 126 (Y126) interacts with pheophytin a. Residues D170 and E189 each coordinate [CaMn4O5] cluster. Residues 197–218 (FHMLGVAGVFGGALFAAMHGSL) traverse the membrane as a helical segment. H198 provides a ligand contact to chlorophyll a. Residues H215 and 264 to 265 (SF) contribute to the a quinone site. A Fe cation-binding site is contributed by H215. H272 is a Fe cation binding site. The chain crosses the membrane as a helical span at residues 274–288 (FLGAWPVVGIWFAAL). Positions 332, 333, 342, and 344 each coordinate [CaMn4O5] cluster. The propeptide occupies 345 to 360 (SGDAQMVALNAPAIEG).

It belongs to the reaction center PufL/M/PsbA/D family. PSII is composed of 1 copy each of membrane proteins PsbA, PsbB, PsbC, PsbD, PsbE, PsbF, PsbH, PsbI, PsbJ, PsbK, PsbL, PsbM, PsbT, PsbX, PsbY, PsbZ, Psb30/Ycf12, peripheral proteins PsbO, CyanoQ (PsbQ), PsbU, PsbV and a large number of cofactors. It forms dimeric complexes. The D1/D2 heterodimer binds P680, chlorophylls that are the primary electron donor of PSII, and subsequent electron acceptors. It shares a non-heme iron and each subunit binds pheophytin, quinone, additional chlorophylls, carotenoids and lipids. D1 provides most of the ligands for the Mn4-Ca-O5 cluster of the oxygen-evolving complex (OEC). There is also a Cl(-1) ion associated with D1 and D2, which is required for oxygen evolution. The PSII complex binds additional chlorophylls, carotenoids and specific lipids. serves as cofactor. Post-translationally, C-terminally processed by CtpA; processing is essential to allow assembly of the oxygen-evolving complex and photosynthetic growth. Tyr-161 forms a radical intermediate that is referred to as redox-active TyrZ, YZ or Y-Z. In terms of processing, C-terminally processed by CtpA; processing is essential to allow assembly of the oxygen-evolving complex and thus photosynthetic growth.

It localises to the cellular thylakoid membrane. It carries out the reaction 2 a plastoquinone + 4 hnu + 2 H2O = 2 a plastoquinol + O2. Photosystem II (PSII) is a light-driven water:plastoquinone oxidoreductase that uses light energy to abstract electrons from H(2)O, generating O(2) and a proton gradient subsequently used for ATP formation. It consists of a core antenna complex that captures photons, and an electron transfer chain that converts photonic excitation into a charge separation. The D1/D2 (PsbA/PsbD) reaction center heterodimer binds P680, the primary electron donor of PSII as well as several subsequent electron acceptors. This is Photosystem II protein D1 1 from Synechocystis sp. (strain ATCC 27184 / PCC 6803 / Kazusa).